Reading from the N-terminus, the 103-residue chain is CLAVATA3/ESR (CLE)-related protein 22 (103 aa).

Residues 1 to 34 (MGNYYSRRKSRKHITTVALIILLLLLFLFLYAKA) form the signal peptide. A disordered region spans residues 37-103 (SSPNIHHHST…FTGPNPLHNR (67 aa)). A compositionally biased stretch (basic residues) spans 41 to 50 (IHHHSTHGSL). Residues 66–76 (NAASSRGSKYT) show a composition bias toward polar residues. P97 carries the post-translational modification Hydroxyproline. The O-linked (Ara...) hydroxyproline glycan is linked to P97.

It belongs to the CLV3/ESR signal peptide family. Post-translationally, the O-glycosylation (arabinosylation) of the hydroxyproline Pro-97 enhances binding affinity of the CLE22p peptide for its receptor. In terms of tissue distribution, mostly expressed in stems and apex, and, to a lower extent, in seedlings, leaves, flowers and siliques.

The protein resides in the secreted. The protein localises to the extracellular space. Extracellular signal peptide that regulates cell fate. Represses root apical meristem maintenance. The protein is CLAVATA3/ESR (CLE)-related protein 22 of Arabidopsis thaliana (Mouse-ear cress).